The primary structure comprises 487 residues: WD repeat, SAM and U-box domain-containing protein 1 (487 aa).

WD repeat units follow at residues 10 to 47 (SHRDDVNCVAFSGDLLATCSADKSICVYSSRDFSELPF), 52 to 93 (GHGY…AVLE), 95 to 134 (PGRSPVRVCAFSPDSSHLVSGGSDGSIALWDFTSRTLRRT), 137 to 176 (VNDTSIVACSFTPCGQMFITGSTYGDLRLWDLNMNHLHAE), 179 to 227 (AHDL…SAGI), 237 to 276 (GQSAPVLSCAYSPDGQMLVSGSVDKTVTVYQADEGVLLYT), and 279 to 318 (QHDRYVTACAFSPTAPLIATGSMDKSVNIWRMEEGSSAQG). The SAM domain occupies 347–411 (WSEEEVLAWL…MKKIEELKMV (65 aa)). The U-box domain occupies 416 to 487 (GTPDEFLCPI…MAIFRWSTSQ (72 aa)).

This Danio rerio (Zebrafish) protein is WD repeat, SAM and U-box domain-containing protein 1 (wdsub1).